Consider the following 611-residue polypeptide: Actin-binding LIM protein 2 (611 aa).

LIM zinc-binding domains are found at residues 22–81, 81–141, 151–210, and 210–270; these read ILCN…LYGT, TRCF…VSVG, RSCG…KFGI, and IRCD…ARTE. Cys83, Cys86, His103, Cys106, Cys109, Cys112, Cys131, and Cys134 together coordinate Zn(2+). Cys212, Cys215, His232, Cys235, Cys238, Cys241, His260, and Cys263 together coordinate Zn(2+). Residues 269 to 278 show a composition bias toward basic and acidic residues; the sequence is TEDRNKETRT. Disordered regions lie at residues 269 to 295 and 336 to 527; these read TEDR…SGSP and YISH…DQRN. Low complexity-rich tracts occupy residues 279–295 and 363–372; these read SSES…SGSP and SSPSSTGSVS. Ser282, Ser294, Ser364, and Ser367 each carry phosphoserine. The span at 393-404 shows a compositional bias: polar residues; it reads SGRSTPSLSVLS. A Phosphoserine modification is found at Ser452. Residue Thr472 is modified to Phosphothreonine. Residues 473–488 show a composition bias toward polar residues; that stretch reads RTNSPDLDTQSLSHSS. Phosphoserine occurs at positions 476 and 578. An HP domain is found at 543-611; that stretch reads MREYKIYPYD…NDLKKKALLF (69 aa).

In terms of assembly, interacts with F-actin and ABRA. In terms of tissue distribution, highly expressed in skeletal muscle.

It localises to the cytoplasm. Functionally, may act as scaffold protein. May stimulate ABRA activity and ABRA-dependent SRF transcriptional activity. The polypeptide is Actin-binding LIM protein 2 (ABLIM2) (Homo sapiens (Human)).